The chain runs to 726 residues: Catalase-peroxidase (726 aa).

A disordered region spans residues 1–33 (MSTSDDIHNTTATGKCPFHQGGHDQSAGAGTTT). Positions 105-226 (WHGAGTYRSI…LGATEMGLIY (122 aa)) form a cross-link, tryptophyl-tyrosyl-methioninium (Trp-Tyr) (with M-252). His106 functions as the Proton acceptor in the catalytic mechanism. A cross-link (tryptophyl-tyrosyl-methioninium (Tyr-Met) (with W-105)) is located at residues 226–252 (YVNPEGPDHSGEPLSAAAAIRATFGNM). Residue His267 coordinates heme b.

Belongs to the peroxidase family. Peroxidase/catalase subfamily. Homodimer or homotetramer. Heme b is required as a cofactor. Formation of the three residue Trp-Tyr-Met cross-link is important for the catalase, but not the peroxidase activity of the enzyme.

The enzyme catalyses H2O2 + AH2 = A + 2 H2O. It catalyses the reaction 2 H2O2 = O2 + 2 H2O. Its function is as follows. Bifunctional enzyme with both catalase and broad-spectrum peroxidase activity. The polypeptide is Catalase-peroxidase (Shigella boydii serotype 18 (strain CDC 3083-94 / BS512)).